Reading from the N-terminus, the 439-residue chain is Glutamine synthetase (439 aa).

The 82-residue stretch at 12–93 (SKIKFVQLVF…VYGFIYKDNK (82 aa)) folds into the GS beta-grasp domain. One can recognise a GS catalytic domain in the interval 99-439 (PRGILKRALE…EWELERYFFL (341 aa)). Mg(2+) is bound by residues E122 and E124. E172 is a binding site for ATP. Positions 177 and 184 each coordinate Mg(2+). G229 is a binding site for L-glutamate. H233 contributes to the Mg(2+) binding site. ATP contacts are provided by residues 235–237 (HIS) and S237. L-glutamate contacts are provided by R283, E289, and R301. The ATP site is built by R301, R306, and K313. A Mg(2+)-binding site is contributed by E318. L-glutamate is bound at residue R320.

This sequence belongs to the glutamine synthetase family. In terms of assembly, oligomer of 12 subunits arranged in the form of two hexagons. Mg(2+) is required as a cofactor.

Its subcellular location is the cytoplasm. The enzyme catalyses L-glutamate + NH4(+) + ATP = L-glutamine + ADP + phosphate + H(+). Probably involved in nitrogen metabolism via ammonium assimilation. Catalyzes the ATP-dependent biosynthesis of glutamine from glutamate and ammonia. This is Glutamine synthetase from Pyrococcus woesei.